The sequence spans 88 residues: Small ribosomal subunit protein bS20 (88 aa).

Positions 1–11 are enriched in basic and acidic residues; it reads MANIKSSEKDI. 2 disordered regions span residues 1-31 and 69-88; these read MANI…LRTQ and SKNA…SSAA.

Belongs to the bacterial ribosomal protein bS20 family.

Binds directly to 16S ribosomal RNA. The chain is Small ribosomal subunit protein bS20 from Leptospira interrogans serogroup Icterohaemorrhagiae serovar copenhageni (strain Fiocruz L1-130).